An 859-amino-acid polypeptide reads, in one-letter code: Protein FAM171A1 (859 aa).

The N-terminal stretch at 1-20 (MSGSTAVALLFCVLSCSVWG) is a signal peptide. At 21–307 (AGSKASHEHN…VTQDITSYHT (287 aa)) the chain is on the extracellular side. N-linked (GlcNAc...) asparagine glycans are attached at residues asparagine 163, asparagine 194, and asparagine 198. Residues 308–328 (IFLLAILGGIAFILLVLLCIL) form a helical membrane-spanning segment. Residues 329 to 859 (LYYCRRKCLK…ERPLLAFNKK (531 aa)) lie on the Cytoplasmic side of the membrane. Disordered stretches follow at residues 397–421 (SRDF…LDNL), 484–509 (TNHV…PEPE), and 771–859 (QSPS…FNKK). Positions 400–416 (FGSREELLSHQEEKSRM) are enriched in basic and acidic residues. 2 stretches are compositionally biased toward polar residues: residues 484-497 (TNHV…NIQE) and 797-806 (SGSQTPSLQE). Over residues 838 to 852 (GENKKSPWQKREERP) the composition is skewed to basic and acidic residues.

Belongs to the FAM171 family.

Its subcellular location is the cell membrane. In terms of biological role, may be involved in the regulation of the cytoskeletal dynamics, plays a role in actin stress fiber formation. The protein is Protein FAM171A1 (fam171a1) of Xenopus laevis (African clawed frog).